A 254-amino-acid polypeptide reads, in one-letter code: 3-deoxy-manno-octulosonate cytidylyltransferase (254 aa).

It belongs to the KdsB family.

Its subcellular location is the cytoplasm. The enzyme catalyses 3-deoxy-alpha-D-manno-oct-2-ulosonate + CTP = CMP-3-deoxy-beta-D-manno-octulosonate + diphosphate. It functions in the pathway nucleotide-sugar biosynthesis; CMP-3-deoxy-D-manno-octulosonate biosynthesis; CMP-3-deoxy-D-manno-octulosonate from 3-deoxy-D-manno-octulosonate and CTP: step 1/1. The protein operates within bacterial outer membrane biogenesis; lipopolysaccharide biosynthesis. In terms of biological role, activates KDO (a required 8-carbon sugar) for incorporation into bacterial lipopolysaccharide in Gram-negative bacteria. In Polynucleobacter asymbioticus (strain DSM 18221 / CIP 109841 / QLW-P1DMWA-1) (Polynucleobacter necessarius subsp. asymbioticus), this protein is 3-deoxy-manno-octulosonate cytidylyltransferase.